Reading from the N-terminus, the 380-residue chain is Glucose-1-phosphate adenylyltransferase (380 aa).

Alpha-D-glucose 1-phosphate-binding positions include glycine 164, 179–180 (EK), and serine 190.

This sequence belongs to the bacterial/plant glucose-1-phosphate adenylyltransferase family. In terms of assembly, homotetramer.

It catalyses the reaction alpha-D-glucose 1-phosphate + ATP + H(+) = ADP-alpha-D-glucose + diphosphate. It functions in the pathway glycan biosynthesis; glycogen biosynthesis. Its function is as follows. Involved in the biosynthesis of ADP-glucose, a building block required for the elongation reactions to produce glycogen. Catalyzes the reaction between ATP and alpha-D-glucose 1-phosphate (G1P) to produce pyrophosphate and ADP-Glc. This is Glucose-1-phosphate adenylyltransferase from Streptococcus pneumoniae serotype 2 (strain D39 / NCTC 7466).